Here is a 461-residue protein sequence, read N- to C-terminus: Photosystem II CP43 reaction center protein (461 aa).

Residues 1 to 2 (ME) constitute a propeptide that is removed on maturation. T3 is subject to N-acetylthreonine. Phosphothreonine is present on T3. Transmembrane regions (helical) follow at residues 57–81 (LFEV…PHLA), 122–143 (LLGP…KDRN), 166–188 (KALY…RKIT), 243–263 (KPFA…LSYS), and 279–300 (WFNN…ASQA). [CaMn4O5] cluster is bound at residue E355. The helical transmembrane segment at 435–459 (RARAAAAGFEKGIDRDLEPVLSMTP) threads the bilayer.

The protein belongs to the PsbB/PsbC family. PsbC subfamily. PSII is composed of 1 copy each of membrane proteins PsbA, PsbB, PsbC, PsbD, PsbE, PsbF, PsbH, PsbI, PsbJ, PsbK, PsbL, PsbM, PsbT, PsbX, PsbY, PsbZ, Psb30/Ycf12, at least 3 peripheral proteins of the oxygen-evolving complex and a large number of cofactors. It forms dimeric complexes. Binds multiple chlorophylls and provides some of the ligands for the Ca-4Mn-5O cluster of the oxygen-evolving complex. It may also provide a ligand for a Cl- that is required for oxygen evolution. PSII binds additional chlorophylls, carotenoids and specific lipids. serves as cofactor.

It localises to the plastid. Its subcellular location is the chloroplast thylakoid membrane. Functionally, one of the components of the core complex of photosystem II (PSII). It binds chlorophyll and helps catalyze the primary light-induced photochemical processes of PSII. PSII is a light-driven water:plastoquinone oxidoreductase, using light energy to abstract electrons from H(2)O, generating O(2) and a proton gradient subsequently used for ATP formation. The sequence is that of Photosystem II CP43 reaction center protein from Ceratophyllum demersum (Rigid hornwort).